Consider the following 543-residue polypeptide: MSAKEIKFATDARDRMLRGVEILTNAVKVTLGPKGRNVIIDKAYGAPRITKDGVTVAKEIELADKFENMGAQMVREVASKTNDLAGDGTTTATVLAASILREGAKLVAAGMNPMDLKRGIDQAVAAVVVEIKAKAKKVKSSAEIAQVGTIAANGDATVGAMIAKAMDKVGNDGVITVEEAKTAETELDVVEGMQFDRGYLSPYFVTNADKMRVELEEPYVLIHEKKLGNLQAMLPILEAVVQSGRPLLIISEDVEGEALATLVVNKLRGGLKVAAVKAPGFGDRRKAMLEDIAVLTAGQMISEDLGIKLENVTIEMLGRAKRVLIEKDTTTIIDGAGTKATIQARVAQIKGQIEETTSDYDKEKLQERLAKLSGGVAVIRVGGVTESEVKEKKDRIDDALNATRAAVEEGIVPGGGVALLRARSALSGLNGANADVTAGISIVLRALEAPIRQIAENSGVEGSIVVGKLADSKDHNLGFDAQNETYVDMIKAGIVDPAKVVRTALQDAGSIAALLITAEAMITDIPAKDAAPAGGGGGGMGGY.

Residues 30 to 33, Lys51, 87 to 91, Gly415, and Asp496 contribute to the ATP site; these read TLGP and DGTTT.

The protein belongs to the chaperonin (HSP60) family. As to quaternary structure, forms a cylinder of 14 subunits composed of two heptameric rings stacked back-to-back. Interacts with the co-chaperonin GroES.

The protein localises to the cytoplasm. The enzyme catalyses ATP + H2O + a folded polypeptide = ADP + phosphate + an unfolded polypeptide.. Together with its co-chaperonin GroES, plays an essential role in assisting protein folding. The GroEL-GroES system forms a nano-cage that allows encapsulation of the non-native substrate proteins and provides a physical environment optimized to promote and accelerate protein folding. This is Chaperonin GroEL 1 from Mesorhizobium japonicum (strain LMG 29417 / CECT 9101 / MAFF 303099) (Mesorhizobium loti (strain MAFF 303099)).